A 583-amino-acid polypeptide reads, in one-letter code: Glucosidase 2 subunit beta (583 aa).

The signal sequence occupies residues 1-26 (MVRLNLAVVALAAGALSASASASSSA). Cys-91 and Cys-115 are joined by a disulfide. The stretch at 130–252 (NRCEKVGKEY…LTLLLDDLAK (123 aa)) forms a coiled coil. Residues 455-562 (NKCFSKDMGE…KVATPAVCFP (108 aa)) form the MRH domain. 3 disulfides stabilise this stretch: Cys-457/Cys-470, Cys-519/Cys-548, and Cys-533/Cys-560. The Prevents secretion from ER signature appears at 580–583 (KDEL).

In terms of assembly, heterodimer of a catalytic subunit alpha and a subunit beta.

It localises to the endoplasmic reticulum. Functionally, subunit of glucosidase 2, which cleaves sequentially the 2 innermost alpha-1,3-linked glucose residues from the Glc(2)Man(9)GlcNAc(2) oligosaccharide precursor of immature glycoproteins in the endoplasmic reticulum (ER). Specifically required for the cleavage of the final glucose. The subunit beta retains the catalytic subunit alpha in the ER. In Mycosarcoma maydis (Corn smut fungus), this protein is Glucosidase 2 subunit beta.